We begin with the raw amino-acid sequence, 46 residues long: Protein PsbN (46 aa).

Residues 7-27 (ALSVAIGVLAVLLGMTGFGVY) traverse the membrane as a helical segment.

Belongs to the PsbN family.

The protein resides in the cellular thylakoid membrane. In terms of biological role, may play a role in photosystem I and II biogenesis. This chain is Protein PsbN, found in Parasynechococcus marenigrum (strain WH8102).